Here is a 268-residue protein sequence, read N- to C-terminus: Movement protein (268 aa).

Residues 215–243 (GKKSDVRKGKNSSSDRSVPNKNYRNVKDF) are disordered. A compositionally biased stretch (polar residues) spans 225-237 (NSSSDRSVPNKNY).

It belongs to the tobamovirus movement protein family. In terms of assembly, binds to host RBCS at the plasmodesmata; this interaction seems required for viral systemic movement. In resistant plants, interacts with host MBP2C at host microtubules; this interaction prevents virus cell to cell movement. In resistant plants, interacts with host resistance (R) protein (e.g. tomato ToMV resistance protein TM-2(2), AC Q71BG9) at the host plasma membrane; this interaction triggers host defense responses leading to programmed cell death.

Its subcellular location is the host cytoplasm. The protein localises to the host cytoskeleton. It localises to the host cell junction. The protein resides in the host plasmodesma. Functionally, transports viral genome to neighboring plant cells directly through plasmosdesmata, without any budding. The movement protein allows efficient cell to cell propagation, by bypassing the host cell wall barrier. Forms a ribonucleoprotein complex with viral RNA. Binds microtubules and modulates microtubule stability. Can bind double-stranded DNA. Triggers host hypersensitive defense reaction in incompatible plants harboring resistance (R) proteins. The protein is Movement protein (MP) of Nicotiana tabacum (Common tobacco).